We begin with the raw amino-acid sequence, 257 residues long: Ribonuclease HII (257 aa).

The RNase H type-2 domain maps to 72 to 257; that stretch reads TYIAGIDEVG…FAPIKDMIQK (186 aa). The a divalent metal cation site is built by Asp78, Glu79, and Asp170.

Belongs to the RNase HII family. The cofactor is Mn(2+). Mg(2+) is required as a cofactor.

It localises to the cytoplasm. The enzyme catalyses Endonucleolytic cleavage to 5'-phosphomonoester.. Functionally, endonuclease that specifically degrades the RNA of RNA-DNA hybrids. The protein is Ribonuclease HII of Bacillus cereus (strain AH820).